A 437-amino-acid chain; its full sequence is tRNA wybutosine-synthesizing protein 2 homolog (437 aa).

S-adenosyl-L-methionine-binding positions include Ser208, Lys215, Glu255, and 283 to 284; that span reads DN. The span at 331–344 shows a compositional bias: polar residues; sequence SFSGKNPQPPGSSN. The interval 331–374 is disordered; that stretch reads SFSGKNPQPPGSSNMEKKHWPHPQKITTDKQGNRTTGSCMGEMS.

Belongs to the class I-like SAM-binding methyltransferase superfamily. TRM5/TYW2 family.

It carries out the reaction 4-demethylwyosine(37) in tRNA(Phe) + S-adenosyl-L-methionine = 4-demethyl-7-[(3S)-3-amino-3-carboxypropyl]wyosine(37) in tRNA(Phe) + S-methyl-5'-thioadenosine + H(+). Its pathway is tRNA modification; wybutosine-tRNA(Phe) biosynthesis. Functionally, S-adenosyl-L-methionine-dependent transferase that acts as a component of the wybutosine biosynthesis pathway. Wybutosine is a hyper modified guanosine with a tricyclic base found at the 3'-position adjacent to the anticodon of eukaryotic phenylalanine tRNA. Catalyzes the transfer of the alpha-amino-alpha-carboxypropyl (acp) group from S-adenosyl-L-methionine to the C-7 position of 4-demethylwyosine (imG-14) to produce wybutosine-86. This Rattus norvegicus (Rat) protein is tRNA wybutosine-synthesizing protein 2 homolog (Trmt12).